Consider the following 1063-residue polypeptide: Mediator of RNA polymerase II transcription subunit 15 (1063 aa).

Over residues 149 to 175 (LQQSQIQQQRQQQQQQSQQPQQTQQPQ) the composition is skewed to low complexity. Disordered stretches follow at residues 149 to 194 (LQQS…SGSV), 286 to 342 (QQQQ…NATN), 422 to 482 (SQNA…QPIN), 500 to 544 (NKAR…AFTK), and 728 to 789 (TASI…SVGN). Composition is skewed to polar residues over residues 176-192 (ASSPTAPNTEANQQRSG) and 301-310 (PQGNVGAQSL). Residues 311 to 342 (QSMSPQDQPSTQQQQPQRTAAPPNNPNVNATN) are compositionally biased toward low complexity. Over residues 422–442 (SQNAPNTNKLGNPQPDNTGNP) the composition is skewed to polar residues. The span at 443–460 (QAFSQQAFAQQQQQQQQQ) shows a compositional bias: low complexity. Composition is skewed to polar residues over residues 461-482 (LHRTSNPTSASVTSQNGQQPIN) and 500-527 (NKARNATQPTQPPVSQVDYSNNLPPNLD). Low complexity-rich tracts occupy residues 528 to 542 (TSSTFRSSASPPSAF) and 733 to 758 (QQQQPQPQSQQQQQASQFPQAPSVSS). The segment covering 766 to 776 (SIPNAQPSVPG) has biased composition (polar residues). Ser-948 is modified (phosphoserine).

Belongs to the Mediator complex subunit 15 family. Component of the Mediator complex. Component of a med15-hrp1 subcomplex, which flexibly associates with the other Mediator components.

It localises to the nucleus. Its function is as follows. Component of the Mediator complex, a coactivator involved in the regulated transcription of nearly all RNA polymerase II-dependent genes. Mediator functions as a bridge to convey information from gene-specific regulatory proteins to the basal RNA polymerase II transcription machinery. Mediator is recruited to promoters by direct interactions with regulatory proteins and serves as a scaffold for the assembly of a functional preinitiation complex with RNA polymerase II and the general transcription factors. Component of a med15-hrp1 subcomplex, linking the Mediator complex to the chromatin-remodeling activity of hrp1 at a distinct subset of hrp1-bound gene promoters. The chain is Mediator of RNA polymerase II transcription subunit 15 (med15) from Schizosaccharomyces pombe (strain 972 / ATCC 24843) (Fission yeast).